Here is a 932-residue protein sequence, read N- to C-terminus: 2-oxoglutarate dehydrogenase E1 component (932 aa).

It belongs to the alpha-ketoglutarate dehydrogenase family. In terms of assembly, homodimer. Part of the 2-oxoglutarate dehydrogenase (OGDH) complex composed of E1 (2-oxoglutarate dehydrogenase), E2 (dihydrolipoamide succinyltransferase) and E3 (dihydrolipoamide dehydrogenase); the complex contains multiple copies of the three enzymatic components (E1, E2 and E3). Thiamine diphosphate serves as cofactor.

It carries out the reaction N(6)-[(R)-lipoyl]-L-lysyl-[protein] + 2-oxoglutarate + H(+) = N(6)-[(R)-S(8)-succinyldihydrolipoyl]-L-lysyl-[protein] + CO2. Functionally, E1 component of the 2-oxoglutarate dehydrogenase (OGDH) complex which catalyzes the decarboxylation of 2-oxoglutarate, the first step in the conversion of 2-oxoglutarate to succinyl-CoA and CO(2). This chain is 2-oxoglutarate dehydrogenase E1 component, found in Staphylococcus aureus (strain USA300).